The chain runs to 229 residues: Flagellar L-ring protein (229 aa).

A signal peptide spans 1 to 25; the sequence is MKQVRLPSSATVRAACAVAVAALAG. Residue cysteine 26 is the site of N-palmitoyl cysteine attachment. A lipid anchor (S-diacylglycerol cysteine) is attached at cysteine 26.

It belongs to the FlgH family. In terms of assembly, the basal body constitutes a major portion of the flagellar organelle and consists of four rings (L,P,S, and M) mounted on a central rod.

The protein localises to the cell outer membrane. The protein resides in the bacterial flagellum basal body. In terms of biological role, assembles around the rod to form the L-ring and probably protects the motor/basal body from shearing forces during rotation. The polypeptide is Flagellar L-ring protein (Burkholderia cenocepacia (strain ATCC BAA-245 / DSM 16553 / LMG 16656 / NCTC 13227 / J2315 / CF5610) (Burkholderia cepacia (strain J2315))).